The sequence spans 469 residues: MDRRIYGIETEFGLTHSAPEGPALSADDAARRLFAPVLAWGRASNVFLPNGGRLYLDVGSHPEYATAEAATLHDVVAQDAAGERIVDELRSRLQESLDAEGVRGTVHLFKNNVDSAGNAFGSHENYMIARSTEFSRLLGHLLPFLVTRQILVGAGKVHPSGPPAFGAFAPGDGAASYSFSQRADHIWEGSSSATTRSRPMINTRDEPHADAQHYRRLHVITGDSNMSQTTTALKIGATDLLLRMIEAGQILPDRTLADPASALRQVSHDLTGTARLALADGSSRTALELQHEVLEAVTRFVQRHGAHHDRVPWVLELWERGLRAVAEQNASLVDRELDWAVKKKLLDAYAASHGMDLSHPRLAQLDLAYHDTSPTHGLFHMLERRGAVESFVSPQDVSRAVGQAPETRARLRGRFVAAAHAADVNHTVDWVHLKLNGPHSQRISMCKDPFATTQPDVEEMIRDLAAGAV.

Glu-9 is a Mg(2+) binding site. Position 53 (Arg-53) interacts with ATP. A Mg(2+)-binding site is contributed by Tyr-55. Asp-57 acts as the Proton acceptor in catalysis. Residue Glu-63 coordinates Mg(2+). The ATP site is built by Thr-66 and Trp-430.

Belongs to the Pup ligase/Pup deamidase family. Pup-conjugating enzyme subfamily.

It catalyses the reaction ATP + [prokaryotic ubiquitin-like protein]-L-glutamate + [protein]-L-lysine = ADP + phosphate + N(6)-([prokaryotic ubiquitin-like protein]-gamma-L-glutamyl)-[protein]-L-lysine.. It participates in protein degradation; proteasomal Pup-dependent pathway. It functions in the pathway protein modification; protein pupylation. Functionally, catalyzes the covalent attachment of the prokaryotic ubiquitin-like protein modifier Pup to the proteasomal substrate proteins, thereby targeting them for proteasomal degradation. This tagging system is termed pupylation. The ligation reaction involves the side-chain carboxylate of the C-terminal glutamate of Pup and the side-chain amino group of a substrate lysine. This chain is Pup--protein ligase, found in Kocuria rhizophila (strain ATCC 9341 / DSM 348 / NBRC 103217 / DC2201).